Consider the following 774-residue polypeptide: Transmembrane GTPase fzo-1 (774 aa).

The interval Met1–Arg29 is disordered. Topologically, residues Met1–Val617 are cytoplasmic. A compositionally biased stretch (basic residues) spans Arg20–Arg29. Positions Tyr51–Asn71 form a coiled coil. The region spanning Gln97–Glu352 is the Dynamin-type G domain. The tract at residues Gly107 to Ser114 is G1 motif. Ser110–Thr115 lines the GTP pocket. The segment at Thr133 to Thr134 is G2 motif. The tract at residues Asp211 to Gly214 is G3 motif. Residue Asn270 to Asp273 coordinates GTP. The interval Asn270 to Asp273 is G4 motif. Glu300 is a region of interest (G5 motif). Ser317 lines the GTP pocket. A coiled-coil region spans residues Asn385–Arg415. A helical membrane pass occupies residues Leu618–Val638. The Mitochondrial intermembrane segment spans residues Tyr639–Lys640. The chain crosses the membrane as a helical span at residues Ala641 to Glu661. Over Arg662–Pro774 the chain is Cytoplasmic.

This sequence belongs to the TRAFAC class dynamin-like GTPase superfamily. Dynamin/Fzo/YdjA family. Mitofusin subfamily. Interacts with ced-9; interaction may be suppressed by interaction of ced-9 with egl-1.

The protein localises to the mitochondrion outer membrane. The catalysed reaction is GTP + H2O = GDP + phosphate + H(+). Its function is as follows. Probable transmembrane GTPase. Mediates mitochondrial fusion. Fusion of mitochondria occurs in many cell types and constitutes an important step in mitochondria morphology, which is balanced between fusion and fission. Dispensable for normal apoptotic processes during embryonic development. The polypeptide is Transmembrane GTPase fzo-1 (Caenorhabditis elegans).